A 157-amino-acid polypeptide reads, in one-letter code: Urease accessory protein UreE (157 aa).

Belongs to the UreE family.

It localises to the cytoplasm. Involved in urease metallocenter assembly. Binds nickel. Probably functions as a nickel donor during metallocenter assembly. In Corynebacterium glutamicum (strain R), this protein is Urease accessory protein UreE.